The following is a 285-amino-acid chain: MTAQIIDGKLISQTVRSEVGARVKARIEAGLRAPGLAVVLVGQDPASQVYVGSKRRACEEVGFVSKSYDLPTTTTEAELLTLIDTLNQDPEIDGILVQLPLPAGMDSTKILEHIDPEKDVDGFHPYNVGRLSQRIPKLRSCTPKGIITLLDRYNIQVRGMHAVVVGASNIVGRPMTLELLLAGCTTTTCHRFTKDLEHHIRQADLVVVAVGKPNFIPGEWIKEGAVVVDVGINRLDTGKLIGDVEFDVAKTKASYITPVPGGVGPMTVASLIENTLLACEQFHSK.

NADP(+) contacts are provided by residues 166-168 and isoleucine 232; that span reads GAS.

This sequence belongs to the tetrahydrofolate dehydrogenase/cyclohydrolase family. As to quaternary structure, homodimer.

It catalyses the reaction (6R)-5,10-methylene-5,6,7,8-tetrahydrofolate + NADP(+) = (6R)-5,10-methenyltetrahydrofolate + NADPH. It carries out the reaction (6R)-5,10-methenyltetrahydrofolate + H2O = (6R)-10-formyltetrahydrofolate + H(+). It participates in one-carbon metabolism; tetrahydrofolate interconversion. Catalyzes the oxidation of 5,10-methylenetetrahydrofolate to 5,10-methenyltetrahydrofolate and then the hydrolysis of 5,10-methenyltetrahydrofolate to 10-formyltetrahydrofolate. This Aliivibrio salmonicida (strain LFI1238) (Vibrio salmonicida (strain LFI1238)) protein is Bifunctional protein FolD.